The primary structure comprises 642 residues: Threonine--tRNA ligase (642 aa).

The region spanning 1-61 (MPVITLPDGS…ETDSELSIIT (61 aa)) is the TGS domain. The interval 243 to 534 (DHRKIGKQLD…LIEEYAGKFP (292 aa)) is catalytic. Zn(2+) contacts are provided by Cys-334, His-385, and His-511.

This sequence belongs to the class-II aminoacyl-tRNA synthetase family. As to quaternary structure, homodimer. Zn(2+) is required as a cofactor.

It is found in the cytoplasm. It catalyses the reaction tRNA(Thr) + L-threonine + ATP = L-threonyl-tRNA(Thr) + AMP + diphosphate + H(+). In terms of biological role, catalyzes the attachment of threonine to tRNA(Thr) in a two-step reaction: L-threonine is first activated by ATP to form Thr-AMP and then transferred to the acceptor end of tRNA(Thr). Also edits incorrectly charged L-seryl-tRNA(Thr). This chain is Threonine--tRNA ligase, found in Shewanella halifaxensis (strain HAW-EB4).